The primary structure comprises 429 residues: Bifunctional protein GlmU (429 aa).

A pyrophosphorylase region spans residues 1–223 (MKTSILILAA…EDEFMGINDK (223 aa)). UDP-N-acetyl-alpha-D-glucosamine-binding positions include 8-11 (LAAG), Lys-22, and 81-82 (GT). A Mg(2+)-binding site is contributed by Asp-102. UDP-N-acetyl-alpha-D-glucosamine-binding residues include Gly-135, Glu-149, Asn-164, and Asn-221. Asn-221 contacts Mg(2+). Positions 224–244 (FELSIAENFMQEKIKKYWMQQ) are linker. The tract at residues 245–429 (GVIFHLPQST…KDYYYKKFQK (185 aa)) is N-acetyltransferase. UDP-N-acetyl-alpha-D-glucosamine-binding residues include Arg-308 and Lys-325. The Proton acceptor role is filled by His-336. Tyr-339 and Asn-350 together coordinate UDP-N-acetyl-alpha-D-glucosamine. Residues 359 to 360 (NY), Ser-378, Ala-396, and Arg-413 each bind acetyl-CoA.

In the N-terminal section; belongs to the N-acetylglucosamine-1-phosphate uridyltransferase family. This sequence in the C-terminal section; belongs to the transferase hexapeptide repeat family. In terms of assembly, homotrimer. It depends on Mg(2+) as a cofactor.

The protein resides in the cytoplasm. It carries out the reaction alpha-D-glucosamine 1-phosphate + acetyl-CoA = N-acetyl-alpha-D-glucosamine 1-phosphate + CoA + H(+). The enzyme catalyses N-acetyl-alpha-D-glucosamine 1-phosphate + UTP + H(+) = UDP-N-acetyl-alpha-D-glucosamine + diphosphate. It participates in nucleotide-sugar biosynthesis; UDP-N-acetyl-alpha-D-glucosamine biosynthesis; N-acetyl-alpha-D-glucosamine 1-phosphate from alpha-D-glucosamine 6-phosphate (route II): step 2/2. It functions in the pathway nucleotide-sugar biosynthesis; UDP-N-acetyl-alpha-D-glucosamine biosynthesis; UDP-N-acetyl-alpha-D-glucosamine from N-acetyl-alpha-D-glucosamine 1-phosphate: step 1/1. Its pathway is bacterial outer membrane biogenesis; LPS lipid A biosynthesis. Catalyzes the last two sequential reactions in the de novo biosynthetic pathway for UDP-N-acetylglucosamine (UDP-GlcNAc). The C-terminal domain catalyzes the transfer of acetyl group from acetyl coenzyme A to glucosamine-1-phosphate (GlcN-1-P) to produce N-acetylglucosamine-1-phosphate (GlcNAc-1-P), which is converted into UDP-GlcNAc by the transfer of uridine 5-monophosphate (from uridine 5-triphosphate), a reaction catalyzed by the N-terminal domain. The chain is Bifunctional protein GlmU from Campylobacter jejuni subsp. jejuni serotype O:6 (strain 81116 / NCTC 11828).